Consider the following 353-residue polypeptide: UDP-N-acetylglucosamine--N-acetylmuramyl-(pentapeptide) pyrophosphoryl-undecaprenol N-acetylglucosamine transferase (353 aa).

UDP-N-acetyl-alpha-D-glucosamine contacts are provided by residues serine 11–glycine 13, arginine 164, serine 194, and glutamine 289.

It belongs to the glycosyltransferase 28 family. MurG subfamily.

It localises to the cell membrane. It carries out the reaction di-trans,octa-cis-undecaprenyl diphospho-N-acetyl-alpha-D-muramoyl-L-alanyl-D-glutamyl-meso-2,6-diaminopimeloyl-D-alanyl-D-alanine + UDP-N-acetyl-alpha-D-glucosamine = di-trans,octa-cis-undecaprenyl diphospho-[N-acetyl-alpha-D-glucosaminyl-(1-&gt;4)]-N-acetyl-alpha-D-muramoyl-L-alanyl-D-glutamyl-meso-2,6-diaminopimeloyl-D-alanyl-D-alanine + UDP + H(+). It functions in the pathway cell wall biogenesis; peptidoglycan biosynthesis. Functionally, cell wall formation. Catalyzes the transfer of a GlcNAc subunit on undecaprenyl-pyrophosphoryl-MurNAc-pentapeptide (lipid intermediate I) to form undecaprenyl-pyrophosphoryl-MurNAc-(pentapeptide)GlcNAc (lipid intermediate II). The protein is UDP-N-acetylglucosamine--N-acetylmuramyl-(pentapeptide) pyrophosphoryl-undecaprenol N-acetylglucosamine transferase of Clostridium kluyveri (strain ATCC 8527 / DSM 555 / NBRC 12016 / NCIMB 10680 / K1).